The following is a 391-amino-acid chain: L-tryptophan--pyruvate aminotransferase 1 (391 aa).

Pyridoxal 5'-phosphate is bound by residues tyrosine 58, 100-101, asparagine 168, 191-194, 214-217, and arginine 225; these read ST, DFAY, and TFSK. N6-(pyridoxal phosphate)lysine is present on lysine 217.

The protein belongs to the alliinase family. The cofactor is pyridoxal 5'-phosphate. As to expression, expressed at the leaf margin and in the vasculature of emerging young leaves. Expressed in the quiescent center and in the vasculature of root tips. Detected in the shoot apical meristem, stems, sepals, stamen filaments, the shoot and root junction, the stigma and the base of the silique.

The protein localises to the cytoplasm. The catalysed reaction is L-tryptophan + 2-oxoglutarate = indole-3-pyruvate + L-glutamate. It carries out the reaction L-tryptophan + pyruvate = indole-3-pyruvate + L-alanine. Its pathway is plant hormone metabolism; auxin biosynthesis. With respect to regulation, inhibited by L-kynurenine. In terms of biological role, L-tryptophan aminotransferase involved in auxin (IAA) biosynthesis. Can convert L-tryptophan and pyruvate to indole-3-pyruvic acid (IPA) and alanine. Catalyzes the first step in IPA branch of the auxin biosynthetic pathway. Required for auxin production to initiate multiple change in growth in response to environmental and developmental cues. It is also active with phenylalanine, tyrosine, leucine, alanine, methionine and glutamine. Both TAA1 and TAR2 are required for maintaining proper auxin levels in roots, while TAA1, TAR1 and TAR2 are required for proper embryo patterning. Involved in the maintenance of the root stem cell niches and required for shade avoidance. The sequence is that of L-tryptophan--pyruvate aminotransferase 1 (TAA1) from Arabidopsis thaliana (Mouse-ear cress).